A 148-amino-acid chain; its full sequence is Hut operon positive regulatory protein (148 aa).

This sequence belongs to the HutP family. Homohexamer.

In terms of biological role, antiterminator that binds to cis-acting regulatory sequences on the mRNA in the presence of histidine, thereby suppressing transcription termination and activating the hut operon for histidine utilization. The protein is Hut operon positive regulatory protein of Bacillus velezensis (strain DSM 23117 / BGSC 10A6 / LMG 26770 / FZB42) (Bacillus amyloliquefaciens subsp. plantarum).